A 247-amino-acid polypeptide reads, in one-letter code: 5'-nucleotidase SurE (247 aa).

Positions 8, 9, 39, and 91 each coordinate a divalent metal cation.

The protein belongs to the SurE nucleotidase family. The cofactor is a divalent metal cation.

The protein resides in the cytoplasm. The catalysed reaction is a ribonucleoside 5'-phosphate + H2O = a ribonucleoside + phosphate. Functionally, nucleotidase that shows phosphatase activity on nucleoside 5'-monophosphates. This is 5'-nucleotidase SurE from Laribacter hongkongensis (strain HLHK9).